The primary structure comprises 336 residues: UDP-3-O-acylglucosamine N-acyltransferase (336 aa).

H233 functions as the Proton acceptor in the catalytic mechanism.

Belongs to the transferase hexapeptide repeat family. LpxD subfamily. As to quaternary structure, homotrimer.

It catalyses the reaction a UDP-3-O-[(3R)-3-hydroxyacyl]-alpha-D-glucosamine + a (3R)-hydroxyacyl-[ACP] = a UDP-2-N,3-O-bis[(3R)-3-hydroxyacyl]-alpha-D-glucosamine + holo-[ACP] + H(+). It participates in bacterial outer membrane biogenesis; LPS lipid A biosynthesis. Functionally, catalyzes the N-acylation of UDP-3-O-acylglucosamine using 3-hydroxyacyl-ACP as the acyl donor. Is involved in the biosynthesis of lipid A, a phosphorylated glycolipid that anchors the lipopolysaccharide to the outer membrane of the cell. This is UDP-3-O-acylglucosamine N-acyltransferase from Helicobacter pylori (strain HPAG1).